A 340-amino-acid polypeptide reads, in one-letter code: Ferrochelatase (340 aa).

Positions 218 and 298 each coordinate Fe cation.

The protein belongs to the ferrochelatase family.

The protein resides in the cytoplasm. The catalysed reaction is heme b + 2 H(+) = protoporphyrin IX + Fe(2+). The protein operates within porphyrin-containing compound metabolism; protoheme biosynthesis; protoheme from protoporphyrin-IX: step 1/1. In terms of biological role, catalyzes the ferrous insertion into protoporphyrin IX. In Wolbachia sp. subsp. Brugia malayi (strain TRS), this protein is Ferrochelatase.